Consider the following 62-residue polypeptide: Large ribosomal subunit protein uL30 (62 aa).

This sequence belongs to the universal ribosomal protein uL30 family. As to quaternary structure, part of the 50S ribosomal subunit.

This chain is Large ribosomal subunit protein uL30, found in Cereibacter sphaeroides (strain ATCC 17029 / ATH 2.4.9) (Rhodobacter sphaeroides).